The sequence spans 1222 residues: Probable disease resistance protein At5g45510 (1222 aa).

49–56 (GEAGIGKT) is an ATP binding site. The stretch at 122–183 (GERDEDEEEE…KLEAEKKLVD (62 aa)) forms a coiled coil. Basic and acidic residues-rich tracts occupy residues 171 to 205 (AAEK…KEKT), 212 to 224 (GEDK…ERKP), 263 to 279 (RRQE…HAEG), and 286 to 322 (SGEK…HEKV). Disordered stretches follow at residues 171 to 225 (AAEK…RKPY) and 263 to 327 (RRQE…PPTI). Threonine 293 is modified (phosphothreonine). 11 LRR repeats span residues 654-676 (LLRV…KALT), 677-699 (KLNT…FFES), 702-724 (ELRS…SGLK), 725-747 (ELHC…QELV), 785-806 (KLQH…QDSA), 813-835 (SLTR…KPLS), 836-856 (GLQI…EVCF), 861-883 (ELKT…EDLS), 884-906 (SLNE…EKLE), 907-929 (NLEV…FEKM), and 931-951 (YLRV…PADT).

Belongs to the disease resistance NB-LRR family.

Functionally, probable disease resistance protein. The chain is Probable disease resistance protein At5g45510 from Arabidopsis thaliana (Mouse-ear cress).